Reading from the N-terminus, the 71-residue chain is Large ribosomal subunit protein bL31 (71 aa).

The Zn(2+) site is built by Cys16, Cys18, Cys37, and Cys40.

This sequence belongs to the bacterial ribosomal protein bL31 family. Type A subfamily. In terms of assembly, part of the 50S ribosomal subunit. It depends on Zn(2+) as a cofactor.

Binds the 23S rRNA. This chain is Large ribosomal subunit protein bL31, found in Nitratidesulfovibrio vulgaris (strain DSM 19637 / Miyazaki F) (Desulfovibrio vulgaris).